The sequence spans 580 residues: Acyl-coenzyme A synthetase ACSM4, mitochondrial (580 aa).

A mitochondrion-targeting transit peptide spans 1 to 22 (MKVLLHCQRLRFIWLAKPAGRH). Residues 229-237 (TSGTTGSPK), 368-373 (EGYGQT), aspartate 455, arginine 470, and lysine 566 each bind ATP.

The protein belongs to the ATP-dependent AMP-binding enzyme family. The cofactor is Mg(2+). Mn(2+) is required as a cofactor.

Its subcellular location is the mitochondrion. The catalysed reaction is a medium-chain fatty acid + ATP + CoA = a medium-chain fatty acyl-CoA + AMP + diphosphate. The enzyme catalyses hexanoate + ATP + CoA = hexanoyl-CoA + AMP + diphosphate. It catalyses the reaction octanoate + ATP + CoA = octanoyl-CoA + AMP + diphosphate. It carries out the reaction decanoate + ATP + CoA = decanoyl-CoA + AMP + diphosphate. The catalysed reaction is dodecanoate + ATP + CoA = dodecanoyl-CoA + AMP + diphosphate. Catalyzes the activation of fatty acids by CoA to produce an acyl-CoA, the first step in fatty acid metabolism. Capable of activating medium-chain fatty acids with a preference for C6-12 fatty acids. The sequence is that of Acyl-coenzyme A synthetase ACSM4, mitochondrial (Acsm4) from Mus musculus (Mouse).